The sequence spans 37 residues: Large ribosomal subunit protein bL36 (37 aa).

This sequence belongs to the bacterial ribosomal protein bL36 family.

The polypeptide is Large ribosomal subunit protein bL36 (Desulforamulus reducens (strain ATCC BAA-1160 / DSM 100696 / MI-1) (Desulfotomaculum reducens)).